The chain runs to 682 residues: Potassium-transporting ATPase ATP-binding subunit (682 aa).

The next 4 membrane-spanning stretches (helical) occupy residues 34-54 (PVMF…IAMA), 62-82 (ALFS…ANFA), 219-239 (IALT…TATL), and 254-274 (VLVA…LSAI). The active-site 4-aspartylphosphate intermediate is the Asp307. Residues Asp344, Glu348, 377-384 (FTAQSRMS), and Lys395 contribute to the ATP site. Positions 518 and 522 each coordinate Mg(2+). 3 helical membrane passes run 588-608 (FAII…LNIM), 616-636 (AILS…PLAL), and 662-682 (LLVP…CGLV).

It belongs to the cation transport ATPase (P-type) (TC 3.A.3) family. Type IA subfamily. The system is composed of three essential subunits: KdpA, KdpB and KdpC.

It localises to the cell inner membrane. The catalysed reaction is K(+)(out) + ATP + H2O = K(+)(in) + ADP + phosphate + H(+). In terms of biological role, part of the high-affinity ATP-driven potassium transport (or Kdp) system, which catalyzes the hydrolysis of ATP coupled with the electrogenic transport of potassium into the cytoplasm. This subunit is responsible for energy coupling to the transport system and for the release of the potassium ions to the cytoplasm. The polypeptide is Potassium-transporting ATPase ATP-binding subunit (Escherichia coli O81 (strain ED1a)).